The primary structure comprises 62 residues: Toxin Ct28 (62 aa).

Residues 1 to 22 form the signal peptide; sequence MKAFYGILIILLFCSMFKLNES. 3 disulfide bridges follow: cysteine 29-cysteine 51, cysteine 35-cysteine 56, and cysteine 39-cysteine 58. Position 61 is an asparagine amide (asparagine 61).

The protein belongs to the short scorpion toxin superfamily. Potassium channel inhibitor family. Alpha-KTx 02 subfamily. As to expression, expressed by the venom gland.

It localises to the secreted. In terms of biological role, blocks voltage-gated potassium channels. This Centruroides tecomanus (Scorpion) protein is Toxin Ct28.